The chain runs to 253 residues: Putative glutamine amidotransferase PB2B2.05 (253 aa).

The Glutamine amidotransferase type-1 domain maps to 5-228 (IIALSVGFSN…INRSKWHMKQ (224 aa)). The Nucleophile role is filled by Cys100. Residues His200 and Glu202 contribute to the active site.

Its subcellular location is the cytoplasm. It localises to the nucleus. In Schizosaccharomyces pombe (strain 972 / ATCC 24843) (Fission yeast), this protein is Putative glutamine amidotransferase PB2B2.05.